Consider the following 367-residue polypeptide: uncharacterized protein (367 aa).

Helical transmembrane passes span 35–55 (YVYD…IILW), 61–81 (LALF…TLLV), 92–112 (EVAD…TAAG), and 113–133 (LMFS…PLFL). 3 disordered regions span residues 177–220 (KLPK…PASI), 249–283 (SNIK…YYTP), and 296–367 (GDIS…SRPK). The span at 257-274 (NTKSILHTPLNRRSPSGS) shows a compositional bias: polar residues. Over residues 302-312 (SSSSTSSKTST) the composition is skewed to low complexity. Residues 323–342 (SRSERNARHHRNKEDHRQNQ) are compositionally biased toward basic and acidic residues. The span at 357–367 (PRRKKYRSRPK) shows a compositional bias: basic residues.

This sequence belongs to the chlamydial CPn_0443/CT_005/TC_0273 family.

The protein localises to the cell membrane. This is an uncharacterized protein from Chlamydia muridarum (strain MoPn / Nigg).